The following is a 228-amino-acid chain: Ribose-5-phosphate isomerase A (228 aa).

Residues 32-35 (TGST), 85-88 (DGAD), and 98-101 (KGGG) contribute to the substrate site. The active-site Proton acceptor is the Glu-107. Lys-125 is a substrate binding site.

This sequence belongs to the ribose 5-phosphate isomerase family. In terms of assembly, homodimer.

It catalyses the reaction aldehydo-D-ribose 5-phosphate = D-ribulose 5-phosphate. It participates in carbohydrate degradation; pentose phosphate pathway; D-ribose 5-phosphate from D-ribulose 5-phosphate (non-oxidative stage): step 1/1. Its function is as follows. Catalyzes the reversible conversion of ribose-5-phosphate to ribulose 5-phosphate. The polypeptide is Ribose-5-phosphate isomerase A (Ralstonia pickettii (strain 12J)).